A 399-amino-acid chain; its full sequence is Phosphoglycerate kinase (399 aa).

Substrate-binding positions include 24–26 (DYN), arginine 39, 62–65 (HLGR), arginine 121, and arginine 154. Residues lysine 204, glycine 295, glutamate 326, and 355-358 (GGDS) contribute to the ATP site.

It belongs to the phosphoglycerate kinase family. As to quaternary structure, monomer.

The protein resides in the cytoplasm. It catalyses the reaction (2R)-3-phosphoglycerate + ATP = (2R)-3-phospho-glyceroyl phosphate + ADP. The protein operates within carbohydrate degradation; glycolysis; pyruvate from D-glyceraldehyde 3-phosphate: step 2/5. The protein is Phosphoglycerate kinase of Elusimicrobium minutum (strain Pei191).